Reading from the N-terminus, the 109-residue chain is Glutaredoxin-8 (109 aa).

Positions 5–109 (VTKAEEMIKS…EELTKIGLLP (105 aa)) constitute a Glutaredoxin domain. The cysteines at positions 25 and 28 are disulfide-linked.

The protein belongs to the glutaredoxin family. As to quaternary structure, monomer.

It localises to the cytoplasm. Functionally, glutathione-dependent oxidoreductase with lower activity compared to the other members of the glutaredoxin family. The disulfide bond functions as an electron carrier in the glutathione-dependent synthesis of deoxyribonucleotides by the enzyme ribonucleotide reductase. This Saccharomyces cerevisiae (strain ATCC 204508 / S288c) (Baker's yeast) protein is Glutaredoxin-8 (GRX8).